The chain runs to 245 residues: tRNA1(Val) (adenine(37)-N6)-methyltransferase (245 aa).

The protein belongs to the methyltransferase superfamily. tRNA (adenine-N(6)-)-methyltransferase family.

Its subcellular location is the cytoplasm. It carries out the reaction adenosine(37) in tRNA1(Val) + S-adenosyl-L-methionine = N(6)-methyladenosine(37) in tRNA1(Val) + S-adenosyl-L-homocysteine + H(+). Specifically methylates the adenine in position 37 of tRNA(1)(Val) (anticodon cmo5UAC). The protein is tRNA1(Val) (adenine(37)-N6)-methyltransferase of Salmonella paratyphi A (strain ATCC 9150 / SARB42).